We begin with the raw amino-acid sequence, 106 residues long: Pyrimidine/purine nucleoside phosphorylase (106 aa).

Belongs to the nucleoside phosphorylase PpnP family.

It catalyses the reaction a purine D-ribonucleoside + phosphate = a purine nucleobase + alpha-D-ribose 1-phosphate. The catalysed reaction is adenosine + phosphate = alpha-D-ribose 1-phosphate + adenine. It carries out the reaction cytidine + phosphate = cytosine + alpha-D-ribose 1-phosphate. The enzyme catalyses guanosine + phosphate = alpha-D-ribose 1-phosphate + guanine. It catalyses the reaction inosine + phosphate = alpha-D-ribose 1-phosphate + hypoxanthine. The catalysed reaction is thymidine + phosphate = 2-deoxy-alpha-D-ribose 1-phosphate + thymine. It carries out the reaction uridine + phosphate = alpha-D-ribose 1-phosphate + uracil. The enzyme catalyses xanthosine + phosphate = alpha-D-ribose 1-phosphate + xanthine. Functionally, catalyzes the phosphorolysis of diverse nucleosides, yielding D-ribose 1-phosphate and the respective free bases. Can use uridine, adenosine, guanosine, cytidine, thymidine, inosine and xanthosine as substrates. Also catalyzes the reverse reactions. The polypeptide is Pyrimidine/purine nucleoside phosphorylase (Burkholderia ambifaria (strain ATCC BAA-244 / DSM 16087 / CCUG 44356 / LMG 19182 / AMMD) (Burkholderia cepacia (strain AMMD))).